The chain runs to 408 residues: Solute carrier family 35 member F1 (408 aa).

A disordered region spans residues 1–21; sequence MIPPEQPQQQLQPPSPAPPNH. Transmembrane regions (helical) follow at residues 60 to 80, 94 to 114, 129 to 147, 158 to 178, 186 to 206, 221 to 241, 247 to 267, 284 to 304, 311 to 331, and 335 to 355; these read MLIS…IGLT, VFQS…TLAV, WWKY…YLVV, IQLL…FFLL, FIGI…DVLV, LLVL…EYII, VEFL…QLAI, LLYV…PVVI, SVNL…LFLF, and FSGL…LYSS.

The protein belongs to the SLC35F solute transporter family.

It is found in the cytoplasmic vesicle. Its subcellular location is the secretory vesicle. The protein resides in the synaptic vesicle membrane. Its function is as follows. Putative solute transporter. The protein is Solute carrier family 35 member F1 (SLC35F1) of Homo sapiens (Human).